We begin with the raw amino-acid sequence, 273 residues long: 4-hydroxy-tetrahydrodipicolinate reductase (273 aa).

NAD(+) contacts are provided by residues 12 to 17 (GAGGRM) and E38. R39 lines the NADP(+) pocket. Residues 102–104 (GTT) and 126–129 (AANF) contribute to the NAD(+) site. The active-site Proton donor/acceptor is the H159. H160 serves as a coordination point for (S)-2,3,4,5-tetrahydrodipicolinate. The Proton donor role is filled by K163. Position 169 to 170 (169 to 170 (GT)) interacts with (S)-2,3,4,5-tetrahydrodipicolinate.

Belongs to the DapB family. In terms of assembly, homotetramer.

The protein resides in the cytoplasm. The catalysed reaction is (S)-2,3,4,5-tetrahydrodipicolinate + NAD(+) + H2O = (2S,4S)-4-hydroxy-2,3,4,5-tetrahydrodipicolinate + NADH + H(+). It catalyses the reaction (S)-2,3,4,5-tetrahydrodipicolinate + NADP(+) + H2O = (2S,4S)-4-hydroxy-2,3,4,5-tetrahydrodipicolinate + NADPH + H(+). It participates in amino-acid biosynthesis; L-lysine biosynthesis via DAP pathway; (S)-tetrahydrodipicolinate from L-aspartate: step 4/4. Its function is as follows. Catalyzes the conversion of 4-hydroxy-tetrahydrodipicolinate (HTPA) to tetrahydrodipicolinate. This chain is 4-hydroxy-tetrahydrodipicolinate reductase, found in Enterobacter sp. (strain 638).